The chain runs to 91 residues: MKLSNVFLAAVVILTCVCVFQITAVPFIQQVQDEHHVESEELQENQHLTEAEHRQTDPLVLFRTKRQSHLSLCRFCCKCCRNKGCGYCCKF.

A signal peptide spans 1 to 24 (MKLSNVFLAAVVILTCVCVFQITA). Residues 25-64 (VPFIQQVQDEHHVESEELQENQHLTEAEHRQTDPLVLFRT) constitute a propeptide that is removed on maturation. Disulfide bonds link Cys-73/Cys-89, Cys-76/Cys-79, Cys-77/Cys-85, and Cys-80/Cys-88.

This sequence belongs to the hepcidin family.

It localises to the secreted. Its function is as follows. Seems to act as a signaling molecule involved in the maintenance of iron homeostasis. Seems to be required in conjunction with HFE to regulate both intestinal iron absorption and iron storage in macrophages. May also have antimicrobial activity. This chain is Hepcidin-1 (hamp1), found in Danio rerio (Zebrafish).